Here is a 349-residue protein sequence, read N- to C-terminus: N-acetyltaurine hydrolase (349 aa).

The a divalent metal cation site is built by His-26, His-28, Glu-169, His-201, His-230, and Asp-298.

The protein belongs to the metallo-dependent hydrolases superfamily. Phosphotriesterase family. Requires a divalent metal cation as cofactor. Expressed primarily in proximal tubules of the kidney.

The protein resides in the cytoplasm. Its subcellular location is the cytosol. The enzyme catalyses N-acetyltaurine + H2O = taurine + acetate. It carries out the reaction N-propanoyltaurine + H2O = propanoate + taurine. The catalysed reaction is N-acetyl-L-methionine + H2O = L-methionine + acetate. It catalyses the reaction N-acetyl-L-isoleucine + H2O = L-isoleucine + acetate. The enzyme catalyses N-acetyl-L-leucine + H2O = L-leucine + acetate. It carries out the reaction N-acetyl-L-valine + H2O = L-valine + acetate. Its function is as follows. N-acetyltaurine hydrolase that regulates feeding by catalyzing the hydrolysis of N-acetyltaurine into taurine and acetate. N-acetyltaurine has anorexigenic and anti-obesity effects that are dependent on GFRAL receptor and GDF15. PTER also acts on other N-acetyl amino acids (Met, Ile, Leu, Val) and N-propionyltaurine, but at lower rates. Binds resiniferotoxin, a vanilloid that desensitizes nociceptive neurons. The chain is N-acetyltaurine hydrolase from Rattus norvegicus (Rat).